The following is a 140-amino-acid chain: Large ribosomal subunit protein bL17 (140 aa).

The protein belongs to the bacterial ribosomal protein bL17 family. Part of the 50S ribosomal subunit. Contacts protein L32.

This chain is Large ribosomal subunit protein bL17, found in Paramagnetospirillum magneticum (strain ATCC 700264 / AMB-1) (Magnetospirillum magneticum).